Reading from the N-terminus, the 265-residue chain is Photosystem II 22 kDa protein, chloroplastic (265 aa).

The transit peptide at 1-59 directs the protein to the chloroplast; it reads MAQTMLLTSGVTAGHFLRNKSPLAQPKVHHLFLSGNSPVALPSRRQSFVPLALFKPKTK. 2 repeat units span residues 54 to 158 and 159 to 264. 4 helical membrane passes run 96–116, 130–150, 195–215, and 229–249; these read VAMI…KGIL, AEPL…GALG, LFVG…EIIT, and IPIQ…FFAA.

It belongs to the ELIP/psbS family.

Its subcellular location is the plastid. The protein resides in the chloroplast thylakoid membrane. Plays an important role in non-photochemical quenching (NPQ), a process maintains the balance between dissipation and utilization of light energy to minimize generation of oxidizing molecules, thereby protecting the plant against photo-oxidative damage; acts upstream of DLDG1. Is not necessary for efficient light harvesting and photosynthesis. This chain is Photosystem II 22 kDa protein, chloroplastic, found in Arabidopsis thaliana (Mouse-ear cress).